The sequence spans 126 residues: SH2 domain-containing protein 1A (126 aa).

In terms of domain architecture, SH2 spans 6 to 104 (VYHGKISRET…VTPLQYPVEK (99 aa)). The interval 67-92 (ETAPGVHKRFFRKVKNLISAFQKPDQ) is interaction with FYN SH3 domain. Position 89 is an N6-acetyllysine (lysine 89). Residues 100-126 (YPVEKSSGRGPQAPTGRRDSDICLNAP) form a disordered region.

As to quaternary structure, interacts with CD84, CD244, LY9, SLAMF1 and FYN. Interacts with NTRK1, NTRK2 and NTRK3. T-cells.

Its subcellular location is the cytoplasm. Cytoplasmic adapter regulating receptors of the signaling lymphocytic activation molecule (SLAM) family such as SLAMF1, CD244, LY9, CD84, SLAMF6 and SLAMF7. In SLAM signaling seems to cooperate with SH2D1B/EAT-2. Initially it has been proposed that association with SLAMF1 prevents SLAMF1 binding to inhibitory effectors including INPP5D/SHIP1 and PTPN11/SHP-2. However, by simultaneous interactions, recruits FYN which subsequently phosphorylates and activates SLAMF1. Positively regulates CD244/2B4- and CD84-mediated natural killer (NK) cell functions. Can also promote CD48-, SLAMF6 -, LY9-, and SLAMF7-mediated NK cell activation. In the context of NK cell-mediated cytotoxicity enhances conjugate formation with target cells. May also regulate the activity of the neurotrophin receptors NTRK1, NTRK2 and NTRK3. In Mus musculus (Mouse), this protein is SH2 domain-containing protein 1A (Sh2d1a).